The following is a 689-amino-acid chain: UvrABC system protein C (689 aa).

The region spanning 16–95 (TNPGVYRFRD…IKEFAPRFNI (80 aa)) is the GIY-YIG domain. One can recognise a UVR domain in the interval 208–243 (KPYIRELTRQMNEAAECMDFETAAARRDDVGALERV). The interval 316–337 (LAPAASGRRRTARHGSEDVVGQ) is disordered.

The protein belongs to the UvrC family. As to quaternary structure, interacts with UvrB in an incision complex.

It is found in the cytoplasm. In terms of biological role, the UvrABC repair system catalyzes the recognition and processing of DNA lesions. UvrC both incises the 5' and 3' sides of the lesion. The N-terminal half is responsible for the 3' incision and the C-terminal half is responsible for the 5' incision. The protein is UvrABC system protein C of Kocuria rhizophila (strain ATCC 9341 / DSM 348 / NBRC 103217 / DC2201).